Here is a 509-residue protein sequence, read N- to C-terminus: ATP synthase subunit alpha (509 aa).

An ATP-binding site is contributed by 169 to 176 (GDRQTGKT).

Belongs to the ATPase alpha/beta chains family. As to quaternary structure, F-type ATPases have 2 components, CF(1) - the catalytic core - and CF(0) - the membrane proton channel. CF(1) has five subunits: alpha(3), beta(3), gamma(1), delta(1), epsilon(1). CF(0) has four main subunits: a(1), b(1), b'(1) and c(9-12).

It is found in the cell inner membrane. It catalyses the reaction ATP + H2O + 4 H(+)(in) = ADP + phosphate + 5 H(+)(out). In terms of biological role, produces ATP from ADP in the presence of a proton gradient across the membrane. The alpha chain is a regulatory subunit. The sequence is that of ATP synthase subunit alpha from Bradyrhizobium sp. (strain ORS 278).